The sequence spans 102 residues: DNA/RNA-binding protein Alba 2 (102 aa).

The DNA site is built by R10, R13, R40, R42, N43, R46, and R86.

It belongs to the histone-like Alba family. As to quaternary structure, forms homodimers and homotetramers; oligomerization is enhanced and stabilized by DNA. Interacts with Alba 1.

The protein localises to the cytoplasm. The protein resides in the chromosome. Functionally, binds double-stranded DNA tightly but without sequence specificity. Involved in DNA compaction. This Aeropyrum pernix (strain ATCC 700893 / DSM 11879 / JCM 9820 / NBRC 100138 / K1) protein is DNA/RNA-binding protein Alba 2.